The following is a 674-amino-acid chain: Carbon monoxide dehydrogenase/acetyl-CoA synthase subunit beta (674 aa).

A disordered region spans residues 1-25 (MPRFRDLSHNCRPSEAPRVMEPKNR). Residues cysteine 59, cysteine 67, cysteine 68, cysteine 71, cysteine 76, and cysteine 90 each contribute to the [4Fe-4S] cluster site. Histidine 283, cysteine 317, cysteine 355, cysteine 470, cysteine 500, and cysteine 550 together coordinate [Ni-4Fe-4S] cluster.

In terms of assembly, tetramer of two alpha and two beta chains. It depends on [Ni-Fe-S] cluster as a cofactor. [4Fe-4S] cluster serves as cofactor.

It catalyses the reaction CO + 2 oxidized [2Fe-2S]-[ferredoxin] + H2O = 2 reduced [2Fe-2S]-[ferredoxin] + CO2 + 2 H(+). Its function is as follows. The beta subunit (this protein) generates CO from CO(2), while the alpha subunit combines the CO with CoA and a methyl group to form acetyl-CoA. The methyl group, which is incorporated into acetyl-CoA, is transferred to the alpha subunit by a corrinoid iron-sulfur protein. The chain is Carbon monoxide dehydrogenase/acetyl-CoA synthase subunit beta from Moorella thermoacetica (Clostridium thermoaceticum).